Here is a 665-residue protein sequence, read N- to C-terminus: Phenol hydroxylase (665 aa).

FAD contacts are provided by residues 18-19 (PA), 43-45 (DKR), 51-56 (NGQADG), Gln118, Tyr290, Asp358, and 368-372 (GQGMN). Residue Asp55 participates in substrate binding. Position 290 (Tyr290) interacts with substrate.

The protein belongs to the PheA/TfdB FAD monooxygenase family. In terms of assembly, homodimer. The cofactor is FAD.

The enzyme catalyses phenol + NADPH + O2 + H(+) = catechol + NADP(+) + H2O. It participates in aromatic compound metabolism; phenol degradation. Its activity is regulated as follows. Inhibited by excess phenol. Heavy metals such AsCuSO(4), AgNO(3), or HgCl(2) severely inhibit activity. In terms of biological role, hydroxylates phenol to catechol. Phenol is the best substrate, but the enzyme also accepts isomeric diphenols, hydroxyl-, amino-, halogen- or methyl-substituted phenols and, to a lesser degree, cresols. This Cutaneotrichosporon cutaneum (Yeast) protein is Phenol hydroxylase.